Reading from the N-terminus, the 124-residue chain is Small ribosomal subunit protein uS13 (124 aa).

Residues 95-124 (GLPVNGQRTRTNARSSKGPRRTVAGKKKAR) are disordered. Positions 100-109 (GQRTRTNARS) are enriched in polar residues. Residues 111-124 (KGPRRTVAGKKKAR) show a composition bias toward basic residues.

Belongs to the universal ribosomal protein uS13 family. As to quaternary structure, part of the 30S ribosomal subunit. Forms a loose heterodimer with protein S19. Forms two bridges to the 50S subunit in the 70S ribosome.

Functionally, located at the top of the head of the 30S subunit, it contacts several helices of the 16S rRNA. In the 70S ribosome it contacts the 23S rRNA (bridge B1a) and protein L5 of the 50S subunit (bridge B1b), connecting the 2 subunits; these bridges are implicated in subunit movement. Contacts the tRNAs in the A and P-sites. The sequence is that of Small ribosomal subunit protein uS13 from Tropheryma whipplei (strain TW08/27) (Whipple's bacillus).